The primary structure comprises 169 residues: Crossover junction endodeoxyribonuclease RuvC (169 aa).

Catalysis depends on residues Asp11, Glu71, and His143. Residues Asp11, Glu71, and His143 each coordinate Mg(2+).

The protein belongs to the RuvC family. Homodimer which binds Holliday junction (HJ) DNA. The HJ becomes 2-fold symmetrical on binding to RuvC with unstacked arms; it has a different conformation from HJ DNA in complex with RuvA. In the full resolvosome a probable DNA-RuvA(4)-RuvB(12)-RuvC(2) complex forms which resolves the HJ. It depends on Mg(2+) as a cofactor.

It localises to the cytoplasm. It catalyses the reaction Endonucleolytic cleavage at a junction such as a reciprocal single-stranded crossover between two homologous DNA duplexes (Holliday junction).. The RuvA-RuvB-RuvC complex processes Holliday junction (HJ) DNA during genetic recombination and DNA repair. Endonuclease that resolves HJ intermediates. Cleaves cruciform DNA by making single-stranded nicks across the HJ at symmetrical positions within the homologous arms, yielding a 5'-phosphate and a 3'-hydroxyl group; requires a central core of homology in the junction. The consensus cleavage sequence is 5'-(A/T)TT(C/G)-3'. Cleavage occurs on the 3'-side of the TT dinucleotide at the point of strand exchange. HJ branch migration catalyzed by RuvA-RuvB allows RuvC to scan DNA until it finds its consensus sequence, where it cleaves and resolves the cruciform DNA. The protein is Crossover junction endodeoxyribonuclease RuvC of Mesorhizobium japonicum (strain LMG 29417 / CECT 9101 / MAFF 303099) (Mesorhizobium loti (strain MAFF 303099)).